Here is a 470-residue protein sequence, read N- to C-terminus: MHFSIPETESRSGDSGGSAYVAYNIHVNGVLHCRVRYSQLLGLHEQLRKEYGANVLPAFPPKKLFSLTPAEVEQRREQLEKYMQAVRQDPLLGSSETFNSFLRRAQQETQQVPTEEVSLEVLLSNGQKVLVNVLTSDQTEDVLEAVAAKLDLPDDLIGYFSLFLVREKEDGAFSFVRKLQEFELPYVSVTSLRSQEYKIVLRKSYWDSAYDDDVMENRVGLNLLYAQTVSDIERGWILVTKEQHRQLKSLQEKVSKKEFLRLAQTLRHYGYLRFDACVADFPEKDCPVVVSAGNSELSLQLRLPGQQLREGSFRVTRMRCWRVTSSVPLPSGSTSSPGRGRGEVRLELAFEYLMSKDRLQWVTITSPQAIMMSICLQSMVDELMVKKSGGSIRKMLRRRVGGTLRRSDSQQAVKSPPLLESPDATRESMVKLSSKLSAVSLRGIGSPSTDASASDVHGNFAFEGIGDEDL.

In terms of domain architecture, PX spans Met-1 to Thr-109. A 1,2-diacyl-sn-glycero-3-phospho-(1D-myo-inositol-3-phosphate)-binding residues include Arg-36, Ser-38, Lys-62, and Arg-75. One can recognise a Ras-associating domain in the interval Glu-115–Trp-206. Positions Glu-115 to Leu-432 are FERM-like. Residues Gly-270 to Leu-432 form a PTB-like F3 module region. A phosphoserine mark is found at Ser-336, Ser-407, Ser-409, Ser-415, Ser-421, Ser-437, and Ser-440. The segment at Gly-401–Arg-426 is disordered. An interacts with the retriever complex region spans residues Gly-458–Leu-470.

The protein belongs to the sorting nexin family. As to quaternary structure, monomer. Interacts with APP (via cytoplasmic YXNPXY motif). Interacts with KIF1B. Interacts with the C-termini of P-selectin, PTC, LDLR, VLDLR, LRP1 and LRP8. Interacts with KRIT1 (via N-terminus). Interacts with HRAS. Interacts with ITGB1 and ITGB5 (via NPxY motif). Interacts with CCDC22 and CCDC93; the interaction associates SNX17 with the CCC complex. Interacts (via C-terminus) with VPS26C and VPS35L; the interactions are direct and associate SNX17 with the retriever complex.

It localises to the cytoplasm. The protein resides in the early endosome. The protein localises to the cytoplasmic vesicle membrane. In terms of biological role, critical regulator of endosomal recycling of numerous surface proteins, including integrins, signaling receptor and channels. Binds to NPxY sequences in the cytoplasmic tails of target cargos. Associates with retriever and CCC complexes to prevent lysosomal degradation and promote cell surface recycling of numerous cargos such as integrins ITGB1, ITGB5 and their associated alpha subunits. Also required for maintenance of normal cell surface levels of APP and LRP1. Interacts with membranes containing phosphatidylinositol 3-phosphate (PtdIns(3P)). In Homo sapiens (Human), this protein is Sorting nexin-17 (SNX17).